The sequence spans 451 residues: UDP-N-acetylmuramoylalanine--D-glutamate ligase (451 aa).

Residue 120 to 126 (GSNGKTT) coordinates ATP.

The protein belongs to the MurCDEF family.

The protein localises to the cytoplasm. The catalysed reaction is UDP-N-acetyl-alpha-D-muramoyl-L-alanine + D-glutamate + ATP = UDP-N-acetyl-alpha-D-muramoyl-L-alanyl-D-glutamate + ADP + phosphate + H(+). Its pathway is cell wall biogenesis; peptidoglycan biosynthesis. Functionally, cell wall formation. Catalyzes the addition of glutamate to the nucleotide precursor UDP-N-acetylmuramoyl-L-alanine (UMA). The protein is UDP-N-acetylmuramoylalanine--D-glutamate ligase of Bacillus pumilus (strain SAFR-032).